The primary structure comprises 336 residues: Glyoxylate reductase (336 aa).

NADP(+) is bound by residues 158-161, 180-182, and 239-241; these read FGRI, SRT, and IAR. Residues Arg241 and Glu270 contribute to the active site. The Proton donor role is filled by His288. An NADP(+)-binding site is contributed by 288 to 290; that stretch reads HIG.

This sequence belongs to the D-isomer specific 2-hydroxyacid dehydrogenase family. GyaR subfamily. As to quaternary structure, homodimer.

It localises to the cytoplasm. The catalysed reaction is glycolate + NAD(+) = glyoxylate + NADH + H(+). This Pyrococcus furiosus (strain ATCC 43587 / DSM 3638 / JCM 8422 / Vc1) protein is Glyoxylate reductase.